The chain runs to 220 residues: Probable septum site-determining protein MinC (220 aa).

Belongs to the MinC family. As to quaternary structure, interacts with MinD and FtsZ.

Functionally, cell division inhibitor that blocks the formation of polar Z ring septums. Rapidly oscillates between the poles of the cell to destabilize FtsZ filaments that have formed before they mature into polar Z rings. Prevents FtsZ polymerization. The polypeptide is Probable septum site-determining protein MinC (Prochlorococcus marinus subsp. pastoris (strain CCMP1986 / NIES-2087 / MED4)).